Reading from the N-terminus, the 90-residue chain is Small ribosomal subunit protein bS20 (90 aa).

It belongs to the bacterial ribosomal protein bS20 family.

Functionally, binds directly to 16S ribosomal RNA. This is Small ribosomal subunit protein bS20 from Fusobacterium nucleatum subsp. nucleatum (strain ATCC 25586 / DSM 15643 / BCRC 10681 / CIP 101130 / JCM 8532 / KCTC 2640 / LMG 13131 / VPI 4355).